A 535-amino-acid polypeptide reads, in one-letter code: High-affinity fructose transporter ght6 (535 aa).

The Cytoplasmic segment spans residues 1–9; the sequence is MAKILTIVM. The chain crosses the membrane as a helical span at residues 10-30; that stretch reads LVFVSMAGWMFGADTGSIGGI. Topologically, residues 31 to 58 are extracellular; the sequence is TNMRDFQSRYADRYDPVTDTYSYSSARQ. Residues 59–79 form a helical membrane-spanning segment; that stretch reads GLLVGMVNTGTTVGCLLSSPL. Residues 80–87 lie on the Cytoplasmic side of the membrane; that stretch reads GDRFGKRK. A helical transmembrane segment spans residues 88 to 108; that stretch reads CIMGWTLVYITGVIVQLTTIP. The Extracellular segment spans residues 109 to 112; sequence SWVQ. Residues 113 to 133 form a helical membrane-spanning segment; it reads MMVAKIWTGLGIGALSVIAPG. Topologically, residues 134-144 are cytoplasmic; that stretch reads YQSESSPPHIR. The helical transmembrane segment at 145–165 threads the bilayer; sequence GAIVTTYQLFITLGIFIAACI. The Extracellular portion of the chain corresponds to 166–181; the sequence is NMGTHKYTTHPEAQWR. Residues 182 to 202 form a helical membrane-spanning segment; sequence VPIGINLLWGILMFFGMLFLP. Topologically, residues 203–268 are cytoplasmic; the sequence is ESPRYLAVKG…IFSNEIRYRT (66 aa). The chain crosses the membrane as a helical span at residues 269–287; the sequence is LLGMGVMAFQQLTGNNYFF. The Extracellular portion of the chain corresponds to 288–303; the sequence is YYGTQVFRGTGLNSPF. Residues 304–324 traverse the membrane as a helical segment; it reads LAALILDAVNFGCTFGAIFVL. Residues 325–330 are Cytoplasmic-facing; that stretch reads EYFGRR. A helical membrane pass occupies residues 331–351; the sequence is GPLIVGGVWQSICFFIYASVG. The Extracellular portion of the chain corresponds to 352–365; it reads DRALTRPNGTSNHR. The N-linked (GlcNAc...) asparagine glycan is linked to Asn-359. The helical transmembrane segment at 366 to 386 threads the bilayer; that stretch reads AGAVMIVFSCLFIFSFAQTWA. Over 387–406 the chain is Cytoplasmic; that stretch reads PAAYVIVGESYPIRYRSKCA. A helical membrane pass occupies residues 407–427; the sequence is AVATASNWFWNFMISFFTPFI. At 428-434 the chain is on the extracellular side; the sequence is SNSIGFK. A helical transmembrane segment spans residues 435–455; the sequence is YGYVFAACNLCAAIIIFLFAK. The Cytoplasmic portion of the chain corresponds to 456-535; it reads ETKGLTLEEI…PQQVTNPVGL (80 aa). The span at 484–508 shows a compositional bias: basic and acidic residues; sequence DREDIKQSDSEKERGPTSKLHEYVE. The interval 484–535 is disordered; it reads DREDIKQSDSEKERGPTSKLHEYVEHAPNSYASTHSTESENYPQQVTNPVGL. Residues 513 to 535 show a composition bias toward polar residues; that stretch reads SYASTHSTESENYPQQVTNPVGL.

Belongs to the major facilitator superfamily. Sugar transporter (TC 2.A.1.1) family.

It localises to the membrane. High-affinity fructose transporter. The protein is High-affinity fructose transporter ght6 (ght6) of Schizosaccharomyces pombe (strain 972 / ATCC 24843) (Fission yeast).